The chain runs to 252 residues: Probable S-methyl-5'-thioinosine phosphorylase (252 aa).

Phosphate contacts are provided by residues Thr-8 and 44–45; that span reads RH. A substrate-binding site is contributed by Met-173. Position 174 (Thr-174) interacts with phosphate. 197-199 provides a ligand contact to substrate; that stretch reads NYA.

The protein belongs to the PNP/MTAP phosphorylase family. MTAP subfamily. Homotrimer.

The catalysed reaction is S-methyl-5'-thioinosine + phosphate = 5-(methylsulfanyl)-alpha-D-ribose 1-phosphate + hypoxanthine. Its pathway is purine metabolism; purine nucleoside salvage. Functionally, catalyzes the reversible phosphorylation of S-methyl-5'-thioinosine (MTI) to hypoxanthine and 5-methylthioribose-1-phosphate. Involved in the breakdown of S-methyl-5'-thioadenosine (MTA), a major by-product of polyamine biosynthesis. Catabolism of (MTA) occurs via deamination to MTI and phosphorolysis to hypoxanthine. The sequence is that of Probable S-methyl-5'-thioinosine phosphorylase from Methanocaldococcus jannaschii (strain ATCC 43067 / DSM 2661 / JAL-1 / JCM 10045 / NBRC 100440) (Methanococcus jannaschii).